Reading from the N-terminus, the 318-residue chain is Pheromone-regulated membrane protein 5 (318 aa).

The helical transmembrane segment at 75–98 (GTVFIVVGGIAGVIFLAILLWWVI) threads the bilayer. Phosphoserine is present on Ser-129. Positions 238 to 247 (TISSSSASSL) are enriched in low complexity. The disordered stretch occupies residues 238-318 (TISSSSASSL…HMLEGKEQDE (81 aa)). Residues 250-261 (GNEKEVGEDIRK) show a composition bias toward basic and acidic residues. The span at 276–285 (SPESDGSVNR) shows a compositional bias: polar residues. 3 positions are modified to phosphoserine: Ser-279, Ser-282, and Ser-288. Residues 309–318 (HMLEGKEQDE) are compositionally biased toward basic and acidic residues. A Glycyl lysine isopeptide (Lys-Gly) (interchain with G-Cter in ubiquitin) cross-link involves residue Lys-314.

Belongs to the PRM5 family.

Its subcellular location is the membrane. The polypeptide is Pheromone-regulated membrane protein 5 (PRM5) (Saccharomyces cerevisiae (strain ATCC 204508 / S288c) (Baker's yeast)).